Consider the following 738-residue polypeptide: Interleukin-17 receptor D (738 aa).

Residues 1–16 (MAPWLQLCSFFFTVNA) form the signal peptide. Over 17 to 299 (CLNGSQLAVA…VQSPWAGPIR (283 aa)) the chain is Extracellular. N-linked (GlcNAc...) asparagine glycans are attached at residues Asn-19, Asn-55, Asn-62, Asn-80, Asn-137, Asn-171, Asn-206, and Asn-277. A helical transmembrane segment spans residues 300–320 (AVAITVPLVVISAFATLFTVM). Over 321–738 (CRKKQQENIY…TDELQALAPL (418 aa)) the chain is Cytoplasmic. The SEFIR domain occupies 355 to 509 (QPKVFLCYSN…LMDHLPELCA (155 aa)). Residues 653 to 738 (GSPSEMPRDS…TDELQALAPL (86 aa)) form a disordered region. Over residues 667–702 (SSVPSSELSLPLMEGLSPDQIETSSLTESVSSSSGL) the composition is skewed to low complexity. The segment covering 720–731 (SREHGCHSHTDE) has biased composition (basic and acidic residues).

In terms of assembly, self-associates. Interacts with FGFR2 and phosphorylated MAP2K1 or MAP2K2. Associates with a MAP2K1/2-MAPK1/3 complex. Interacts with FGFR1 and MAP3K7.

It is found in the golgi apparatus membrane. The protein resides in the cell membrane. Functionally, feedback inhibitor of fibroblast growth factor mediated Ras-MAPK signaling and ERK activation. Regulates the nuclear ERK signaling pathway by spatially blocking nuclear translocation of activated ERK. Mediates JNK activation and may be involved in apoptosis. May inhibit FGF-induced FGFR1 tyrosine phosphorylation. Might have a role in the early stages of fate specification of GnRH-secreting neurons. Inhibits TGFB-induced epithelial-to-mesenchymal transition in lens epithelial cells. The polypeptide is Interleukin-17 receptor D (Il17rd) (Mus musculus (Mouse)).